Reading from the N-terminus, the 315-residue chain is MLTKSRKYFNQTWIESLFKQTTALFALLVFILLAAILISLVIGSWESIKRFGGSFLLETYWDPVQEQYGAIIPILGTLITAGIALFIAVPISFGIAIFLTELAPNWLKRPISIAIEMLAAIPSIIYGMWGLFVFVPLFQEHIQPVLIDNLGNLPGLELFFSGVPFGVGLFTAGLVLAIMIIPFIASVMRDVFSIVPPMLKEGAYGLGATTWEVVRQVIVPHTRIGLVGSVMLGLGRALGETMAITFIIGNSFQLPNSLFSPSTSIASAIANEFNEAGGLQKSALMELGLLLFVITTMVLILSRLMITKMQQTKGK.

Residues 1-22 (MLTKSRKYFNQTWIESLFKQTT) are Cytoplasmic-facing. A helical transmembrane segment spans residues 23–43 (ALFALLVFILLAAILISLVIG). Over 44 to 77 (SWESIKRFGGSFLLETYWDPVQEQYGAIIPILGT) the chain is Periplasmic. Positions 74–302 (ILGTLITAGI…VITTMVLILS (229 aa)) constitute an ABC transmembrane type-1 domain. A helical membrane pass occupies residues 78 to 98 (LITAGIALFIAVPISFGIAIF). The Cytoplasmic portion of the chain corresponds to 99–117 (LTELAPNWLKRPISIAIEM). A helical membrane pass occupies residues 118-138 (LAAIPSIIYGMWGLFVFVPLF). Over 139-164 (QEHIQPVLIDNLGNLPGLELFFSGVP) the chain is Periplasmic. Residues 165 to 185 (FGVGLFTAGLVLAIMIIPFIA) traverse the membrane as a helical segment. The Cytoplasmic portion of the chain corresponds to 186 to 223 (SVMRDVFSIVPPMLKEGAYGLGATTWEVVRQVIVPHTR). A helical membrane pass occupies residues 224–244 (IGLVGSVMLGLGRALGETMAI). Over 245–281 (TFIIGNSFQLPNSLFSPSTSIASAIANEFNEAGGLQK) the chain is Periplasmic. The chain crosses the membrane as a helical span at residues 282–302 (SALMELGLLLFVITTMVLILS). At 303 to 315 (RLMITKMQQTKGK) the chain is on the cytoplasmic side.

Belongs to the binding-protein-dependent transport system permease family. CysTW subfamily.

The protein localises to the cell inner membrane. Its function is as follows. Part of the binding-protein-dependent transport system for phosphate; probably responsible for the translocation of the substrate across the membrane. This chain is Phosphate transport system permease protein PstC (pstC), found in Haemophilus influenzae (strain ATCC 51907 / DSM 11121 / KW20 / Rd).